A 115-amino-acid chain; its full sequence is Nitrogenase-stabilizing/protective protein NifW (115 aa).

This sequence belongs to the NifW family. As to quaternary structure, homotrimer; associates with NifD.

Functionally, may protect the nitrogenase Fe-Mo protein from oxidative damage. This Methylobacterium sp. (strain 4-46) protein is Nitrogenase-stabilizing/protective protein NifW.